The following is an 837-amino-acid chain: Periplasmic nitrate reductase (837 aa).

Positions methionine 1 to alanine 32 form a signal peptide, tat-type signal. One can recognise a 4Fe-4S Mo/W bis-MGD-type domain in the interval leucine 44–aspartate 100. Residues cysteine 51, cysteine 54, cysteine 58, and cysteine 86 each coordinate [4Fe-4S] cluster. Residues lysine 88, glutamine 155, asparagine 180, cysteine 184, tryptophan 217–methionine 224, serine 248–histidine 252, glutamine 267–aspartate 269, methionine 378, glutamine 382, asparagine 488, serine 514–aspartate 515, lysine 537, aspartate 564, and threonine 724–serine 733 contribute to the Mo-bis(molybdopterin guanine dinucleotide) site. Tryptophan 800 contacts substrate. The Mo-bis(molybdopterin guanine dinucleotide) site is built by asparagine 808 and lysine 825.

This sequence belongs to the prokaryotic molybdopterin-containing oxidoreductase family. NasA/NapA/NarB subfamily. Component of the periplasmic nitrate reductase NapAB complex composed of NapA and NapB. It depends on [4Fe-4S] cluster as a cofactor. Requires Mo-bis(molybdopterin guanine dinucleotide) as cofactor. Post-translationally, predicted to be exported by the Tat system. The position of the signal peptide cleavage has not been experimentally proven.

The protein resides in the periplasm. The enzyme catalyses 2 Fe(II)-[cytochrome] + nitrate + 2 H(+) = 2 Fe(III)-[cytochrome] + nitrite + H2O. Functionally, catalytic subunit of the periplasmic nitrate reductase complex NapAB. Receives electrons from NapB and catalyzes the reduction of nitrate to nitrite. The protein is Periplasmic nitrate reductase of Bradyrhizobium diazoefficiens (strain JCM 10833 / BCRC 13528 / IAM 13628 / NBRC 14792 / USDA 110).